Reading from the N-terminus, the 165-residue chain is V-type proton ATPase 16 kDa proteolipid subunit (165 aa).

Residues Met1–Thr10 lie on the Lumenal side of the membrane. A helical transmembrane segment spans residues Ala11 to Gly33. At Thr34–Ser55 the chain is on the cytoplasmic side. Residues Ile56–Ile76 traverse the membrane as a helical segment. Topologically, residues Ser77–His95 are lumenal. A helical transmembrane segment spans residues Leu96–Gly117. At Asp118–Lys129 the chain is on the cytoplasmic side. Residues Leu130–Leu155 form a helical membrane-spanning segment. The Lumenal portion of the chain corresponds to Ser156–Asp165.

The protein belongs to the V-ATPase proteolipid subunit family. As to quaternary structure, V-ATPase is a heteromultimeric enzyme composed of a peripheral catalytic V1 complex (main components: subunits A, B, C, D, E, and F) attached to an integral membrane V0 proton pore complex (main component: the proteolipid protein; which is present as a hexamer that forms the proton-conducting pore).

Its subcellular location is the vacuole membrane. Proton-conducting pore forming subunit of the membrane integral V0 complex of vacuolar ATPase. V-ATPase is responsible for acidifying a variety of intracellular compartments in eukaryotic cells. This is V-type proton ATPase 16 kDa proteolipid subunit (VATP-P1) from Avena sativa (Oat).